The chain runs to 219 residues: Transmembrane emp24 domain-containing protein 10 (219 aa).

A signal peptide spans 1–31 (MSGLSGPPTRRGPFPLALLLLFLLGPSLVLA). The required for interaction with STX17 stretch occupies residues 1–142 (MSGLSGPPTR…KNYEEIAKVE (142 aa)). At 32–185 (ISFHLPINSR…RDTNESTNTR (154 aa)) the chain is on the lumenal side. A GOLD domain is found at 41–193 (RKCLREEIHK…TRVLYFSIFS (153 aa)). Residues Arg171 and Arg176 each carry the dimethylated arginine modification. Residue Asn179 is glycosylated (N-linked (GlcNAc...) asparagine). A helical membrane pass occupies residues 186–206 (VLYFSIFSMFCLIGLATWQVF). Positions 204-219 (QVFYLRRFFKAKKLIE) are interaction with COPG1. The Cytoplasmic segment spans residues 207-219 (YLRRFFKAKKLIE). The interaction with ARF1 and IL1B stretch occupies residues 207–219 (YLRRFFKAKKLIE). The COPII vesicle coat-binding motif lies at 211–212 (FF). The COPI vesicle coat-binding signature appears at 211–219 (FFKAKKLIE).

The protein belongs to the EMP24/GP25L family. As to quaternary structure, predominantly dimeric and to a lesser extent monomeric in the ER. Monomer and dimer in ERGIC and cis-Golgi network. Forms homooligomer (via GOLD domain); the assembly is promoted by direct binding with leaderless cargos and may form a protein channel that facilitates cargo entry into the ERGIC. Forms heterooligomeric complexes with other members of the p24 family such as TMED2, TMED7 and TMED9. Interacts (via GOLD domain) with TMED2 (via GOLD domain); the complex is required for export of TMED10 from the ER to the cis-Golgi network; the complex is proposed to be involved in cis-Golgi network dynamics and / or biogenesis. Associates with the COPI vesicle coat subunits (coatomer). Tetramerization of the cytoplasmic domain at the Golgi membrane in vitro; the complex is proposed to interact with COPI coatomer and induce budding of the vesicles. Interacts with COPG1; the interaction involves TMED10 homodimer. Interacts with ARF1 (GDP-bound); the interaction probably involves a TMED10 oligomer. Interacts with SEC23A, SEC24B, SEC24C and SEC24D components of the coat protein complex II/COPII, indicative of an association of TMED10 with the COPII vesicle coat. Interacts with CD59. Interacts with MPPE1/PGAP5; the complex might recruit and sort GPI-anchored proteins to the ER-exit site, or the interaction might lead to recycling of PGAP5 between the ER and the Golgi. Interacts with F2LR1/PAR2. Interacts with KDELR2/ERD2; the interaction is disrupted by KDELR2 ligand. Found in a complex composed at least of SURF4, TMED2 and TMED10. Associates with the presenilin-dependent gamma-secretase complex. Interacts with STX17; the interaction is direct. Interacts with IL-1; the interaction is direct. Interacts with RAB21 (active GTP-bound form); the interaction is indirect and regulates TMED10 abundance and localization at the Golgi.

It is found in the endoplasmic reticulum membrane. The protein resides in the endoplasmic reticulum-Golgi intermediate compartment membrane. Its subcellular location is the golgi apparatus membrane. The protein localises to the golgi apparatus. It localises to the cis-Golgi network membrane. It is found in the trans-Golgi network membrane. The protein resides in the cytoplasmic vesicle. Its subcellular location is the secretory vesicle membrane. The protein localises to the cell membrane. It localises to the melanosome. In terms of biological role, cargo receptor involved in protein vesicular trafficking and quality control in the endoplasmic reticulum (ER) and Golgi. The p24 protein family is a group of transmembrane proteins that bind coat protein complex I/COPI and coat protein complex II/COPII involved in vesicular trafficking between the membranes. Acts at the lumenal side for incorporation of secretory cargo molecules into transport vesicles and involved in vesicle coat formation at the cytoplasmic side. Mainly functions in the early secretory pathway and cycles between the ER, ER-Golgi intermediate compartment (ERGIC) and Golgi, mediating cargo transport through COPI and COPII-coated vesicles. In COPII vesicle-mediated anterograde transport, involved in the transport of GPI-anchored proteins by acting together with TMED2 as their cargo receptor; the function specifically implies SEC24C and SEC24D of the COPII vesicle coat and lipid raft-like microdomains of the ER. Recognizes GPI anchors structural remodeled in the ER by the GPI inositol-deacylase/PGAP1 and the metallophosphoesterase MPPE1/PGAP5. In COPI vesicle-mediated retrograde transport, involved in the biogenesis of COPI vesicles and vesicle coat recruitment. Involved in trafficking of amyloid beta A4 protein and soluble APP-beta release (independent from the modulation of gamma-secretase activity). Involved in the KDELR2-mediated retrograde transport of the toxin A subunit (CTX-A-K63)together with COPI and the COOH terminus of KDELR2. On Golgi membranes, acts as a primary receptor for ARF1-GDP, a GTP-binding protein involved in COPI-vesicle formation. Increases coatomer-dependent GTPase-activating activity of ARFGAP2 which mediates the hydrolysis of ARF1-bound GTP and therefore modulates protein trafficking from the Golgi apparatus. Involved in the exocytic trafficking of G protein-coupled receptors F2LR1/PAR2 (trypsin and tryspin-like enzyme receptor), OPRM1 (opioid receptor) and P2RY4 (UTD and UDP receptor) from the Golgi to the plasma membrane, thus contributing to receptor resensitization. In addition to its cargo receptor activity, may also act as a protein channel after oligomerization, facilitating the post-translational entry of leaderless cytoplasmic cargo into the ERGIC. Involved in the translocation into ERGIC, the vesicle entry and the secretion of leaderless cargos (lacking the secretion signal sequence), including the mature form of interleukin 1/IL-1 family members, the alpha-crystallin B chain HSPB5, the carbohydrate-binding proteins galectin-1/LGALS1 and galectin-3/LGALS3, the microtubule-associated protein Tau/MAPT, and the annexin A1/ANXA1; the translocation process is dependent on cargo protein unfolding and enhanced by chaperones HSP90AB1 and HSP90B1/GRP9. Could also associates with the presenilin-dependent gamma-secretase complex in order to regulate gamma-cleavages of the amyloid beta A4 protein to yield amyloid-beta 40/Abeta40. This Pongo abelii (Sumatran orangutan) protein is Transmembrane emp24 domain-containing protein 10 (TMED10).